The primary structure comprises 122 residues: Large ribosomal subunit protein bL12 (122 aa).

The protein belongs to the bacterial ribosomal protein bL12 family. Homodimer. Part of the ribosomal stalk of the 50S ribosomal subunit. Forms a multimeric L10(L12)X complex, where L10 forms an elongated spine to which 2 to 4 L12 dimers bind in a sequential fashion. Binds GTP-bound translation factors.

In terms of biological role, forms part of the ribosomal stalk which helps the ribosome interact with GTP-bound translation factors. Is thus essential for accurate translation. The polypeptide is Large ribosomal subunit protein bL12 (Xylella fastidiosa (strain M12)).